Reading from the N-terminus, the 925-residue chain is Alanine--tRNA ligase (925 aa).

Positions 611, 615, 714, and 718 each coordinate Zn(2+).

This sequence belongs to the class-II aminoacyl-tRNA synthetase family. It depends on Zn(2+) as a cofactor.

Its subcellular location is the cytoplasm. It catalyses the reaction tRNA(Ala) + L-alanine + ATP = L-alanyl-tRNA(Ala) + AMP + diphosphate. Its function is as follows. Catalyzes the attachment of alanine to tRNA(Ala) in a two-step reaction: alanine is first activated by ATP to form Ala-AMP and then transferred to the acceptor end of tRNA(Ala). Also edits incorrectly charged Ser-tRNA(Ala) and Gly-tRNA(Ala) via its editing domain. This is Alanine--tRNA ligase from Methanosarcina acetivorans (strain ATCC 35395 / DSM 2834 / JCM 12185 / C2A).